Reading from the N-terminus, the 1153-residue chain is Otoancorin (1153 aa).

The N-terminal stretch at 1–22 (MSQEPTTYSLFLFLFLSHGVSS) is a signal peptide. An N-linked (GlcNAc...) asparagine glycan is attached at N156. An N-linked (GlcNAc...) (complex) asparagine glycan is attached at N211. N-linked (GlcNAc...) asparagine glycans are attached at residues N244, N289, N321, N394, N398, N460, N544, N812, N911, and N974. The interval 1109–1128 (HSWQDAPASAGPTRTSSSRS) is disordered. A lipid anchor (GPI-anchor amidated alanine) is attached at A1130. Positions 1131–1153 (GALQSWGLWLGCPLLVLMAKLLW) are cleaved as a propeptide — removed in mature form.

Belongs to the stereocilin family.

The protein localises to the apical cell membrane. The protein resides in the secreted. It is found in the extracellular space. Its subcellular location is the extracellular matrix. Functionally, may act as an adhesion molecule. This chain is Otoancorin (OTOA), found in Homo sapiens (Human).